A 406-amino-acid chain; its full sequence is Indole-3-pyruvate monooxygenase YUCCA1 (406 aa).

21–26 (GAGPSG) is an FAD binding site. An NADP(+)-binding site is contributed by 184 to 189 (GCGNSG).

The protein belongs to the FMO family. FAD is required as a cofactor. As to expression, expressed in coleoptile tips, root tips, leaf blade tips, shoot apical meristem, vasculature of stems and flowers.

It catalyses the reaction indole-3-pyruvate + NADPH + O2 + H(+) = (indol-3-yl)acetate + CO2 + NADP(+) + H2O. Functionally, involved in auxin biosynthesis. Converts the indole-3-pyruvic acid (IPA) produced by the TAA family to indole-3-acetic acid (IAA). Functions downstream of TAR2 in auxin biosynthesis. Functions upstream of WOX11, a transcription factor that promotes the development of crown roots. This chain is Indole-3-pyruvate monooxygenase YUCCA1, found in Oryza sativa subsp. japonica (Rice).